We begin with the raw amino-acid sequence, 329 residues long: N-acetyl-gamma-glutamyl-phosphate reductase (329 aa).

Cys-155 is an active-site residue.

This sequence belongs to the NAGSA dehydrogenase family. Type 1 subfamily.

Its subcellular location is the cytoplasm. It catalyses the reaction N-acetyl-L-glutamate 5-semialdehyde + phosphate + NADP(+) = N-acetyl-L-glutamyl 5-phosphate + NADPH + H(+). It participates in amino-acid biosynthesis; L-arginine biosynthesis; N(2)-acetyl-L-ornithine from L-glutamate: step 3/4. In terms of biological role, catalyzes the NADPH-dependent reduction of N-acetyl-5-glutamyl phosphate to yield N-acetyl-L-glutamate 5-semialdehyde. The chain is N-acetyl-gamma-glutamyl-phosphate reductase from Shewanella pealeana (strain ATCC 700345 / ANG-SQ1).